A 156-amino-acid polypeptide reads, in one-letter code: Small ribosomal subunit protein uS7 (156 aa).

It belongs to the universal ribosomal protein uS7 family. In terms of assembly, part of the 30S ribosomal subunit. Contacts proteins S9 and S11.

In terms of biological role, one of the primary rRNA binding proteins, it binds directly to 16S rRNA where it nucleates assembly of the head domain of the 30S subunit. Is located at the subunit interface close to the decoding center, probably blocks exit of the E-site tRNA. The protein is Small ribosomal subunit protein uS7 of Vibrio parahaemolyticus serotype O3:K6 (strain RIMD 2210633).